Here is a 426-residue protein sequence, read N- to C-terminus: Putative nickel insertion protein (426 aa).

The protein belongs to the LarC family.

This chain is Putative nickel insertion protein, found in Nostoc sp. (strain PCC 7120 / SAG 25.82 / UTEX 2576).